Here is a 307-residue protein sequence, read N- to C-terminus: Serine/threonine-protein phosphatase PP2A-5 catalytic subunit (307 aa).

Residues aspartate 55, histidine 57, aspartate 83, and asparagine 115 each coordinate Mn(2+). The Proton donor role is filled by histidine 116. Positions 165 and 239 each coordinate Mn(2+). Leucine 307 bears the Leucine methyl ester mark.

This sequence belongs to the PPP phosphatase family. PP-2A subfamily. PP2A consists of a common heterodimeric core enzyme, composed of a 36 kDa catalytic subunit (subunit C) and a 65 kDa constant regulatory subunit (subunit A), that associates with a variety of regulatory subunits such as subunits B (the R2/B/PR55/B55, R3/B''/PR72/PR130/PR59 and R5/B'/B56 families). Also interacts with CHIP and TAF12B. Interacts with B'THETA. Interacts with CLC-A, CLC-B, CLC-C and CLC-G. It depends on Mn(2+) as a cofactor. Post-translationally, reversibly methyl esterified on Leu-307 by leucine carboxyl methyltransferase 1 (LCMT1) and pectin methylesterase 1 (PME1). Carboxyl methylation influences the affinity of the catalytic subunit for the different regulatory subunits, thereby modulating the PP2A holoenzyme's substrate specificity, enzyme activity and cellular localization. In terms of processing, phosphorylation of either threonine (by autophosphorylation-activated protein kinase) or tyrosine results in inactivation of the phosphatase. Auto-dephosphorylation has been suggested as a mechanism for reactivation. Ubiquitinated. CHIP-mediated ubiquitination enhances phosphatase activity after an abiotic stress such as low temperature or darkness.

The protein resides in the cytoplasm. It localises to the cytosol. Its subcellular location is the peroxisome. The catalysed reaction is O-phospho-L-seryl-[protein] + H2O = L-seryl-[protein] + phosphate. It catalyses the reaction O-phospho-L-threonyl-[protein] + H2O = L-threonyl-[protein] + phosphate. In terms of biological role, associates with the serine/threonine-protein phosphatase PP2A regulatory subunits A and B' to positively regulates beta-oxidation of fatty acids and protoauxins in peroxisomes by dephosphorylating peroxisomal beta-oxidation-related proteins. Involved in the positive regulation of salt stress responses. May function by increasing chloride channel activities on vacuolar membranes. The sequence is that of Serine/threonine-protein phosphatase PP2A-5 catalytic subunit from Arabidopsis thaliana (Mouse-ear cress).